Consider the following 397-residue polypeptide: Acetate kinase (397 aa).

Asn8 is a binding site for Mg(2+). ATP is bound at residue Lys15. Arg89 provides a ligand contact to substrate. The active-site Proton donor/acceptor is the Asp146. ATP is bound by residues 206 to 210 (HLGNG), 281 to 283 (DLR), and 329 to 333 (GVGEN). Glu382 serves as a coordination point for Mg(2+).

This sequence belongs to the acetokinase family. As to quaternary structure, homodimer. It depends on Mg(2+) as a cofactor. Requires Mn(2+) as cofactor.

It is found in the cytoplasm. The catalysed reaction is acetate + ATP = acetyl phosphate + ADP. Its pathway is metabolic intermediate biosynthesis; acetyl-CoA biosynthesis; acetyl-CoA from acetate: step 1/2. Functionally, catalyzes the formation of acetyl phosphate from acetate and ATP. Can also catalyze the reverse reaction. This Bacillus mycoides (strain KBAB4) (Bacillus weihenstephanensis) protein is Acetate kinase.